Consider the following 151-residue polypeptide: NADPH-dependent 7-cyano-7-deazaguanine reductase (151 aa).

Cys51 serves as the catalytic Thioimide intermediate. Residue Asp58 is the Proton donor of the active site. Residues 73–75 and 92–93 each bind substrate; these read VES and HE.

This sequence belongs to the GTP cyclohydrolase I family. QueF type 1 subfamily.

The protein resides in the cytoplasm. It catalyses the reaction 7-aminomethyl-7-carbaguanine + 2 NADP(+) = 7-cyano-7-deazaguanine + 2 NADPH + 3 H(+). Its pathway is tRNA modification; tRNA-queuosine biosynthesis. In terms of biological role, catalyzes the NADPH-dependent reduction of 7-cyano-7-deazaguanine (preQ0) to 7-aminomethyl-7-deazaguanine (preQ1). In Bacteroides thetaiotaomicron (strain ATCC 29148 / DSM 2079 / JCM 5827 / CCUG 10774 / NCTC 10582 / VPI-5482 / E50), this protein is NADPH-dependent 7-cyano-7-deazaguanine reductase.